The chain runs to 533 residues: CTP synthase (533 aa).

Positions 1–265 are amidoligase domain; that stretch reads MTKFIFVTGG…ARYLVRRLGL (265 aa). Ser-13 provides a ligand contact to CTP. Ser-13 contacts UTP. 14 to 19 serves as a coordination point for ATP; it reads GLGKGI. Tyr-54 contacts L-glutamine. Asp-71 serves as a coordination point for ATP. Positions 71 and 139 each coordinate Mg(2+). Residues 146–148, 186–191, and Lys-222 each bind CTP; these read DIE and KTKPTQ. UTP contacts are provided by residues 186 to 191 and Lys-222; that span reads KTKPTQ. Residues 290-532 form the Glutamine amidotransferase type-1 domain; it reads EIAIVGKYVK…VRAARERKYG (243 aa). Gly-351 is an L-glutamine binding site. Cys-378 acts as the Nucleophile; for glutamine hydrolysis in catalysis. L-glutamine contacts are provided by residues 379–382, Glu-402, and Arg-459; that span reads FGFQ. Active-site residues include His-505 and Glu-507.

It belongs to the CTP synthase family. As to quaternary structure, homotetramer.

The enzyme catalyses UTP + L-glutamine + ATP + H2O = CTP + L-glutamate + ADP + phosphate + 2 H(+). It carries out the reaction L-glutamine + H2O = L-glutamate + NH4(+). The catalysed reaction is UTP + NH4(+) + ATP = CTP + ADP + phosphate + 2 H(+). It functions in the pathway pyrimidine metabolism; CTP biosynthesis via de novo pathway; CTP from UDP: step 2/2. Allosterically activated by GTP, when glutamine is the substrate; GTP has no effect on the reaction when ammonia is the substrate. The allosteric effector GTP functions by stabilizing the protein conformation that binds the tetrahedral intermediate(s) formed during glutamine hydrolysis. Inhibited by the product CTP, via allosteric rather than competitive inhibition. Its function is as follows. Catalyzes the ATP-dependent amination of UTP to CTP with either L-glutamine or ammonia as the source of nitrogen. Regulates intracellular CTP levels through interactions with the four ribonucleotide triphosphates. The polypeptide is CTP synthase (Thermococcus gammatolerans (strain DSM 15229 / JCM 11827 / EJ3)).